The following is a 257-amino-acid chain: NAD kinase (257 aa).

The active-site Proton acceptor is the Asp-46. NAD(+) contacts are provided by residues 46-47 (DG), 116-117 (NE), Asp-146, Ala-154, 157-162 (TAYNLS), and Asn-218.

This sequence belongs to the NAD kinase family. It depends on a divalent metal cation as a cofactor.

The protein localises to the cytoplasm. The enzyme catalyses NAD(+) + ATP = ADP + NADP(+) + H(+). Its function is as follows. Involved in the regulation of the intracellular balance of NAD and NADP, and is a key enzyme in the biosynthesis of NADP. Catalyzes specifically the phosphorylation on 2'-hydroxyl of the adenosine moiety of NAD to yield NADP. The sequence is that of NAD kinase from Brucella melitensis biotype 1 (strain ATCC 23456 / CCUG 17765 / NCTC 10094 / 16M).